The chain runs to 1025 residues: Multidrug resistance protein MdtC (1025 aa).

A run of 12 helical transmembrane segments spans residues 3–23, 333–353, 360–380, 387–407, 431–451, 463–483, 528–548, 853–873, 875–895, 897–917, 953–973, and 984–1004; these read FFALFIYRPVATILIAVAITL, EVEQTLVISIALVILVVFLFL, LIPAVAVPVSLIGTFAAMYLC, LSLMALTIATGFVVDDAIVVL, VGFTVLSMSVSLVAVFLPLLL, FAVTLSVAIGISLVISLTLTP, IVGLVLVGTIALNVWMYITIP, VILILAAIATVYIVLGILYES, VHPLTILSTLPSAGVGALLAL, LFDAPFSLIALIGIMLLIGIV, PIMMTTLAALFGALPLVISSG, and ITIVGGLAMSQLLTLYTTPVV.

The protein belongs to the resistance-nodulation-cell division (RND) (TC 2.A.6) family. MdtC subfamily. As to quaternary structure, part of a tripartite efflux system composed of MdtA, MdtB and MdtC. MdtC forms a heteromultimer with MdtB.

It is found in the cell inner membrane. This Enterobacter sp. (strain 638) protein is Multidrug resistance protein MdtC.